The primary structure comprises 67 residues: Sec-independent protein translocase protein TatA (67 aa).

A helical membrane pass occupies residues 1-21; the sequence is MFGIGIQELLVVLVLVLLVFG. The tract at residues 46–67 is disordered; that stretch reads PDEIDITPGKKNGKTDKDDKQA. A compositionally biased stretch (basic and acidic residues) spans 58–67; that stretch reads GKTDKDDKQA.

It belongs to the TatA/E family. In terms of assembly, the Tat system comprises two distinct complexes: a TatABC complex, containing multiple copies of TatA, TatB and TatC subunits, and a separate TatA complex, containing only TatA subunits. Substrates initially bind to the TatABC complex, which probably triggers association of the separate TatA complex to form the active translocon.

It is found in the cell inner membrane. Part of the twin-arginine translocation (Tat) system that transports large folded proteins containing a characteristic twin-arginine motif in their signal peptide across membranes. TatA could form the protein-conducting channel of the Tat system. The sequence is that of Sec-independent protein translocase protein TatA from Nitratidesulfovibrio vulgaris (strain DSM 19637 / Miyazaki F) (Desulfovibrio vulgaris).